A 431-amino-acid polypeptide reads, in one-letter code: Isochorismate synthase MenF (431 aa).

K183 serves as the catalytic Proton acceptor. E233 serves as the catalytic Proton donor. The Mg(2+) site is built by E277 and E414.

Belongs to the isochorismate synthase family. Requires Mg(2+) as cofactor.

It carries out the reaction chorismate = isochorismate. The protein operates within quinol/quinone metabolism; 1,4-dihydroxy-2-naphthoate biosynthesis; 1,4-dihydroxy-2-naphthoate from chorismate: step 1/7. It functions in the pathway quinol/quinone metabolism; menaquinone biosynthesis. Functionally, catalyzes the conversion of chorismate to isochorismate. This is Isochorismate synthase MenF from Pasteurella multocida (strain Pm70).